Reading from the N-terminus, the 244-residue chain is ATP synthase subunit a (244 aa).

6 helical membrane-spanning segments follow: residues 25–45 (ISFT…LLIF), 85–105 (YFAF…FGMI), 115–135 (IIVT…IGFM), 144–164 (LFVP…IEII), 193–213 (GFVI…SVAL), and 216–236 (LEIL…CIYL).

Belongs to the ATPase A chain family. F-type ATPases have 2 components, CF(1) - the catalytic core - and CF(0) - the membrane proton channel. CF(1) has five subunits: alpha(3), beta(3), gamma(1), delta(1), epsilon(1). CF(0) has three main subunits: a(1), b(2) and c(9-12). The alpha and beta chains form an alternating ring which encloses part of the gamma chain. CF(1) is attached to CF(0) by a central stalk formed by the gamma and epsilon chains, while a peripheral stalk is formed by the delta and b chains.

The protein resides in the cell inner membrane. In terms of biological role, key component of the proton channel; it plays a direct role in the translocation of protons across the membrane. In Pelagibacter ubique (strain HTCC1062), this protein is ATP synthase subunit a.